The primary structure comprises 543 residues: Probable E3 ubiquitin-protein ligase ARI9 (543 aa).

The interval 1–26 (MDFSDDDMIDNKSGEENYSYGGGNES) is disordered. Positions 124 to 332 (VNIQCGICFE…RHSGACNRFV (209 aa)) are TRIAD supradomain. Cysteine 128, cysteine 131, cysteine 145, histidine 147, cysteine 150, cysteine 153, cysteine 173, cysteine 178, cysteine 217, cysteine 222, cysteine 240, cysteine 242, cysteine 247, cysteine 250, histidine 255, cysteine 260, cysteine 287, and cysteine 290 together coordinate Zn(2+). The RING-type 1 zinc-finger motif lies at 128 to 178 (CGICFESYTREEIARVSCGHPYCKTCWAGYITTKIEDGPGCLRVKCPEPSC). An IBR-type zinc finger spans residues 197–260 (EKYSRYILRS…SEDAHSPVDC (64 aa)). The segment at 287 to 317 (CPECKRPIEKNDGCNHMTCSAPCGHEFCWIC) adopts an RING-type 2; atypical zinc-finger fold. The active site involves cysteine 300. Residues cysteine 305, cysteine 309, cysteine 314, cysteine 317, histidine 324, and cysteine 328 each coordinate Zn(2+).

The protein belongs to the RBR family. Ariadne subfamily. Requires Zn(2+) as cofactor.

The catalysed reaction is [E2 ubiquitin-conjugating enzyme]-S-ubiquitinyl-L-cysteine + [acceptor protein]-L-lysine = [E2 ubiquitin-conjugating enzyme]-L-cysteine + [acceptor protein]-N(6)-ubiquitinyl-L-lysine.. Its pathway is protein modification; protein ubiquitination. In terms of biological role, might act as an E3 ubiquitin-protein ligase, or as part of E3 complex, which accepts ubiquitin from specific E2 ubiquitin-conjugating enzymes and then transfers it to substrates. The chain is Probable E3 ubiquitin-protein ligase ARI9 (ARI9) from Arabidopsis thaliana (Mouse-ear cress).